The following is a 470-amino-acid chain: Asparagine--tRNA ligase (470 aa).

The protein belongs to the class-II aminoacyl-tRNA synthetase family. Homodimer.

The protein localises to the cytoplasm. The catalysed reaction is tRNA(Asn) + L-asparagine + ATP = L-asparaginyl-tRNA(Asn) + AMP + diphosphate + H(+). The polypeptide is Asparagine--tRNA ligase (Blochmanniella pennsylvanica (strain BPEN)).